A 341-amino-acid chain; its full sequence is UDP-N-acetylenolpyruvoylglucosamine reductase (341 aa).

The region spanning 12 to 182 (LSAYAKRLDI…ISVGLLLKKN (171 aa)) is the FAD-binding PCMH-type domain. Arg158 is an active-site residue. Ser228 (proton donor) is an active-site residue. Glu324 is a catalytic residue.

The protein belongs to the MurB family. It depends on FAD as a cofactor.

It is found in the cytoplasm. The enzyme catalyses UDP-N-acetyl-alpha-D-muramate + NADP(+) = UDP-N-acetyl-3-O-(1-carboxyvinyl)-alpha-D-glucosamine + NADPH + H(+). The protein operates within cell wall biogenesis; peptidoglycan biosynthesis. In terms of biological role, cell wall formation. The polypeptide is UDP-N-acetylenolpyruvoylglucosamine reductase (Photorhabdus laumondii subsp. laumondii (strain DSM 15139 / CIP 105565 / TT01) (Photorhabdus luminescens subsp. laumondii)).